The following is a 205-amino-acid chain: Shieldin complex subunit 1 (205 aa).

As to quaternary structure, component of the shieldin complex, consisting of SHLD1, SHLD2, SHLD3 and MAD2L2/REV7. Within the complex, SHLD2 forms a scaffold which interacts with a SHLD3-MAD2L2 subcomplex via its N-terminus, and with SHLD1 via its C-terminus. Interacts with ASTE1.

It localises to the chromosome. Its function is as follows. Component of the shieldin complex, which plays an important role in repair of DNA double-stranded breaks (DSBs). During G1 and S phase of the cell cycle, the complex functions downstream of TP53BP1 to promote non-homologous end joining (NHEJ) and suppress DNA end resection. Mediates various NHEJ-dependent processes including immunoglobulin class-switch recombination, and fusion of unprotected telomeres. This chain is Shieldin complex subunit 1, found in Homo sapiens (Human).